We begin with the raw amino-acid sequence, 970 residues long: MANETQKVGAIHFPFPFTPYSIQEDFMAELYRVLEAGKIGIFESPTGTGKSLSLICGALSWLRDFEQKKREEEARLLETGTGPLHDEKDESLCLSSSCEGAAGTPRPAGEPAWVTQFVQKKEERDLVDRLKAEQARRKQREERLQQLQHRVQLKYAAKRLRQEEEERENLLRLSREMLETGPEAERLEQLESGEEELVLAEYESDEEKKVASRVDEDEDDLEEEHITKIYYCSRTHSQLAQFVHEVKKSPFGKDVRLVSLGSRQNLCVNEDVKSLGSVQLINDRCVDMQRSRHEKKKGAEEEKPKRRRQEKQAACPFYNHEQMGLLRDEALAEVKDMEQLLALGKEARACPYYGSRLAIPAAQLVVLPYQMLLHAATRQAAGIRLQDQVVIIDEAHNLIDTITGMHSVEVSGSQLCQAHSQLLQYVERYGKRLKAKNLMYLKQILYLLEKFVAVLGGNIKQNPNTQSLSQTGTELKTINDFLFQSQIDNINLFKVQRYCEKSMISRKLFGFTERYGAVFSSREQPKLAGFQQFLQSLQPRTTEALAAPADESQASTLRPASPLMHIQGFLAALTTANQDGRVILSRQGSLSQSTLKFLLLNPAVHFAQVVKECRAVVIAGGTMQPVSDFRQQLLACAGVEAERVVEFSCGHVIPPDNILPLVICSGISNQPLEFTFQKRELPQMMDEVGRILCNLCGVVPGGVVCFFPSYEYLRQVHAHWEKGGLLGRLAARKKIFQEPKSAHQVEQVLLAYSRCIQACGQERGQVTGALLLSVVGGKMSEGINFSDNLGRCVVMVGMPFPNIRSAELQEKMAYLDQTLSPRPGTPREGSGGEPVHEGRQPVHRQGHQAPEGFCQRSAPGPAICPAPCPGQAAGLDPSPCGGQSYLWPRHCCCAEVSPGEVGLFLMGNHTTAWRRALPLSCPLETVFVVGVVCGDPVTKVKPRRRVWSPECCQDPGTGVSSRRRKWGNPE.

One can recognise a Helicase ATP-binding domain in the interval 9–445; sequence GAIHFPFPFT…KNLMYLKQIL (437 aa). 44–51 is a binding site for ATP; the sequence is SPTGTGKS. Ser-262 carries the post-translational modification Phosphoserine. [4Fe-4S] cluster is bound by residues Cys-267 and Cys-285. Over residues 289–304 the composition is skewed to basic and acidic residues; sequence QRSRHEKKKGAEEEKP. The interval 289-312 is disordered; it reads QRSRHEKKKGAEEEKPKRRRQEKQ. [4Fe-4S] cluster contacts are provided by Cys-315 and Cys-350. Residues 393–396 carry the DEAH box motif; sequence DEAH. The segment at 818-849 is disordered; sequence TLSPRPGTPREGSGGEPVHEGRQPVHRQGHQA.

It belongs to the DEAD box helicase family. DEAH subfamily. DDX11/CHL1 sub-subfamily. As to quaternary structure, associates with the CTF18-RFC complex. Associates with a cohesin complex composed of RAD21, SMC1 proteins and SMC3. Interacts with CHTF18. Interacts with DSCC1. Interacts with FEN1; this interaction is direct and increases flap endonuclease activity of FEN1. Interacts with PCNA. Interacts with POLR1A and UBTF. Interacts with RAD21, SMC1 proteins and SMC3. Interacts with RFC2. Interacts with TIMELESS; this interaction increases recruitment of both proteins onto chromatin in response to replication stress induction by hydroxyurea. In terms of assembly, (Microbial infection) Interacts with bovine papillomavirus type 1 regulatory protein E2; this interaction stimulates the recruitment of E2 onto mitotic chromosomes. It depends on Mg(2+) as a cofactor. [4Fe-4S] cluster serves as cofactor. As to expression, expressed in melanoma cells. Not detected in epidermal melanocytes of normal skin (at protein level). Highly expressed in spleen, B-cells, thymus, testis, ovary, small intestine and pancreas. Very low expression seen in brain. Expressed in dividing cells and/or cells undergoing high levels of recombination. No expression detected in cells signaled to terminally differentiate. Expressed weakly in keratinocytes.

Its subcellular location is the nucleus. The protein resides in the nucleolus. It localises to the cytoplasm. The protein localises to the cytoskeleton. It is found in the spindle pole. Its subcellular location is the midbody. The protein resides in the microtubule organizing center. It localises to the centrosome. The protein localises to the chromosome. The catalysed reaction is Couples ATP hydrolysis with the unwinding of duplex DNA at the replication fork by translocating in the 5'-3' direction. This creates two antiparallel DNA single strands (ssDNA). The leading ssDNA polymer is the template for DNA polymerase III holoenzyme which synthesizes a continuous strand.. It catalyses the reaction ATP + H2O = ADP + phosphate + H(+). Its activity is regulated as follows. ATPase activity is stimulated by high magnesium salt levels (up to a 0.1 M), and potassium salts (glutamate, chloride or acetate) are more effective than the corresponding sodium salts. ATPase activity is enhanced by the long non-coding RNA (lncRNA) cohesion regulator noncoding RNA (CONCR). Double-stranded DNA helicase activity is maximal with magnesium ions at low concentrations (0.5-1 mM) whereas is markedly inhibited at higher levels (5 mM and above). Double-stranded DNA helicase activity is stimulated by 25-50 mM potassium acetate, stimulated to a lesser extent by 25 mM of ammonium acetate, and markedly inhibited by sodium acetate. In terms of biological role, DNA-dependent ATPase and ATP-dependent DNA helicase that participates in various functions in genomic stability, including DNA replication, DNA repair and heterochromatin organization as well as in ribosomal RNA synthesis. Its double-stranded DNA helicase activity requires either a minimal 5'-single-stranded tail length of approximately 15 nt (flap substrates) or 10 nt length single-stranded gapped DNA substrates of a partial duplex DNA structure for helicase loading and translocation along DNA in a 5' to 3' direction. The helicase activity is capable of displacing duplex regions up to 100 bp, which can be extended up to 500 bp by the replication protein A (RPA) or the cohesion CTF18-replication factor C (Ctf18-RFC) complex activities. Also shows ATPase- and helicase activities on substrates that mimic key DNA intermediates of replication, repair and homologous recombination reactions, including forked duplex, anti-parallel G-quadruplex and three-stranded D-loop DNA molecules. Plays a role in DNA double-strand break (DSB) repair at the DNA replication fork during DNA replication recovery from DNA damage. Recruited with TIMELESS factor upon DNA-replication stress response at DNA replication fork to preserve replication fork progression, and hence ensure DNA replication fidelity. Also cooperates with TIMELESS factor during DNA replication to regulate proper sister chromatid cohesion and mitotic chromosome segregation. Stimulates 5'-single-stranded DNA flap endonuclease activity of FEN1 in an ATP- and helicase-independent manner; and hence it may contribute in Okazaki fragment processing at DNA replication fork during lagging strand DNA synthesis. Its ability to function at DNA replication fork is modulated by its binding to long non-coding RNA (lncRNA) cohesion regulator non-coding RNA DDX11-AS1/CONCR, which is able to increase both DDX11 ATPase activity and binding to DNA replicating regions. Also plays a role in heterochromatin organization. Involved in rRNA transcription activation through binding to active hypomethylated rDNA gene loci by recruiting UBTF and the RNA polymerase Pol I transcriptional machinery. Plays a role in embryonic development and prevention of aneuploidy. Involved in melanoma cell proliferation and survival. Associates with chromatin at DNA replication fork regions. Binds to single- and double-stranded DNAs. Functionally, (Microbial infection) Required for bovine papillomavirus type 1 regulatory protein E2 loading onto mitotic chromosomes during DNA replication for the viral genome to be maintained and segregated. The sequence is that of ATP-dependent DNA helicase DDX11 from Homo sapiens (Human).